Consider the following 520-residue polypeptide: Cysteine--tRNA ligase (520 aa).

Residue Cys29 coordinates Zn(2+). Residues 31–41 carry the 'HIGH' region motif; the sequence is PTVYNYPHLGN. Zn(2+) contacts are provided by Cys227, His252, and Glu256. Positions 301–305 match the 'KMSKS' region motif; it reads KMSKS. Lys304 contributes to the ATP binding site.

This sequence belongs to the class-I aminoacyl-tRNA synthetase family. In terms of assembly, monomer. Requires Zn(2+) as cofactor.

The protein resides in the cytoplasm. It catalyses the reaction tRNA(Cys) + L-cysteine + ATP = L-cysteinyl-tRNA(Cys) + AMP + diphosphate. The sequence is that of Cysteine--tRNA ligase (cysS) from Treponema pallidum (strain Nichols).